A 341-amino-acid polypeptide reads, in one-letter code: Thiamine-phosphate synthase (341 aa).

The segment at 1-123 (MAVVEEQVVL…AAAAKEWRYR (123 aa)) is unknown. The segment at 61–80 (AARDTPHDPGTGLEHPDEGV) is disordered. Residues 124–341 (VYTLESTATG…AWFLERLNRG (218 aa)) form a thiamine-phosphate synthase region. 4-amino-2-methyl-5-(diphosphooxymethyl)pyrimidine is bound by residues 171–175 (QLREK) and asparagine 203. Mg(2+) is bound by residues aspartate 204 and aspartate 223. Residue serine 242 coordinates 4-amino-2-methyl-5-(diphosphooxymethyl)pyrimidine. 268 to 270 (TPT) provides a ligand contact to 2-[(2R,5Z)-2-carboxy-4-methylthiazol-5(2H)-ylidene]ethyl phosphate. Lysine 271 contacts 4-amino-2-methyl-5-(diphosphooxymethyl)pyrimidine. Glycine 298 serves as a coordination point for 2-[(2R,5Z)-2-carboxy-4-methylthiazol-5(2H)-ylidene]ethyl phosphate.

It belongs to the thiamine-phosphate synthase family. It depends on Mg(2+) as a cofactor.

The catalysed reaction is 2-[(2R,5Z)-2-carboxy-4-methylthiazol-5(2H)-ylidene]ethyl phosphate + 4-amino-2-methyl-5-(diphosphooxymethyl)pyrimidine + 2 H(+) = thiamine phosphate + CO2 + diphosphate. The enzyme catalyses 2-(2-carboxy-4-methylthiazol-5-yl)ethyl phosphate + 4-amino-2-methyl-5-(diphosphooxymethyl)pyrimidine + 2 H(+) = thiamine phosphate + CO2 + diphosphate. It carries out the reaction 4-methyl-5-(2-phosphooxyethyl)-thiazole + 4-amino-2-methyl-5-(diphosphooxymethyl)pyrimidine + H(+) = thiamine phosphate + diphosphate. The protein operates within cofactor biosynthesis; thiamine diphosphate biosynthesis; thiamine phosphate from 4-amino-2-methyl-5-diphosphomethylpyrimidine and 4-methyl-5-(2-phosphoethyl)-thiazole: step 1/1. Its function is as follows. Condenses 4-methyl-5-(beta-hydroxyethyl)thiazole monophosphate (THZ-P) and 2-methyl-4-amino-5-hydroxymethyl pyrimidine pyrophosphate (HMP-PP) to form thiamine monophosphate (TMP). This is Thiamine-phosphate synthase from Gloeobacter violaceus (strain ATCC 29082 / PCC 7421).